The sequence spans 848 residues: DNA-binding protein RFX6 (848 aa).

Positions 56–131 form a DNA-binding region, RFX-type winged-helix; sequence TLQWLEDNYI…YHYYGIGIKE (76 aa).

It belongs to the RFX family. As to expression, expressed in progenitors and hormone expressing cells of the islet lineage.

It localises to the nucleus. Transcription factor required to direct islet cell differentiation during endocrine pancreas development. This chain is DNA-binding protein RFX6 (rfx6), found in Danio rerio (Zebrafish).